Reading from the N-terminus, the 154-residue chain is Ribonuclease H (154 aa).

Residues 5-146 (EQNIVYLYCD…ADELANRGID (142 aa)) form the RNase H type-1 domain. Positions 14, 52, 74, and 138 each coordinate Mg(2+).

Belongs to the RNase H family. As to quaternary structure, monomer. It depends on Mg(2+) as a cofactor.

It localises to the cytoplasm. The catalysed reaction is Endonucleolytic cleavage to 5'-phosphomonoester.. In terms of biological role, endonuclease that specifically degrades the RNA of RNA-DNA hybrids. The chain is Ribonuclease H from Coxiella burnetii (strain CbuK_Q154) (Coxiella burnetii (strain Q154)).